The following is a 268-amino-acid chain: UPF0328 protein ECU05_1640/ECU11_0090 (268 aa).

This sequence belongs to the UPF0328 family.

This Encephalitozoon cuniculi (strain GB-M1) (Microsporidian parasite) protein is UPF0328 protein ECU05_1640/ECU11_0090.